The primary structure comprises 106 residues: Acylphosphatase-2 (106 aa).

The region spanning 16–106 (SVDYEVFGTV…LEYSDFSIRY (91 aa)) is the Acylphosphatase-like domain. Catalysis depends on residues arginine 31 and asparagine 49. At serine 100 the chain carries Phosphoserine.

Belongs to the acylphosphatase family.

The catalysed reaction is an acyl phosphate + H2O = a carboxylate + phosphate + H(+). The polypeptide is Acylphosphatase-2 (Acyp2) (Mus musculus (Mouse)).